The following is a 573-amino-acid chain: Sulfate adenylyltransferase (573 aa).

Positions methionine 1–tyrosine 169 are N-terminal. The segment at aspartate 170 to threonine 394 is catalytic. Glutamine 197 lines the sulfate pocket. Residues glutamine 197 to asparagine 200 and glycine 291 to histidine 294 contribute to the ATP site. Residues threonine 198, arginine 199, and asparagine 200 contribute to the active site. Arginine 199 is a binding site for sulfate. Residue alanine 295 participates in sulfate binding. Valine 333 is a binding site for ATP. The interval glutamine 395 to alanine 573 is allosteric regulation domain; adenylyl-sulfate kinase-like. 3'-phosphoadenylyl sulfate contacts are provided by residues aspartate 434 to arginine 437, arginine 451, isoleucine 477 to alanine 478, and arginine 515.

The protein in the N-terminal section; belongs to the sulfate adenylyltransferase family. In the C-terminal section; belongs to the APS kinase family. As to quaternary structure, homohexamer. Dimer of trimers.

The protein localises to the cytoplasm. The catalysed reaction is sulfate + ATP + H(+) = adenosine 5'-phosphosulfate + diphosphate. The protein operates within sulfur metabolism; hydrogen sulfide biosynthesis; sulfite from sulfate: step 1/3. Allosterically inhibited by 3'-phosphoadenosine 5'-phosphosulfate (PAPS). Its function is as follows. Catalyzes the first intracellular reaction of sulfate assimilation, forming adenosine-5'-phosphosulfate (APS) from inorganic sulfate and ATP. Plays an important role in sulfate activation as a component of the biosynthesis pathway of sulfur-containing amino acids. In Aspergillus oryzae (strain ATCC 42149 / RIB 40) (Yellow koji mold), this protein is Sulfate adenylyltransferase.